The sequence spans 347 residues: DNA polymerase III subunit delta (347 aa).

The protein belongs to the DNA polymerase HolA subunit family. Component of the DNA clamp loading complex consisting of tau(3):delta(1):delta'(1). The DNA polymerase III holoenzyme complex contains at least 10 different subunits organized into 3 functionally essential subassemblies: the Pol III core, the beta sliding clamp processivity factor and the clamp-loading complex. The Pol III core (subunits alpha, epsilon and theta) contains the polymerase and the 3'-5' exonuclease proofreading activities. The polymerase is tethered to the template via the dimeric beta sliding clamp processivity factor. The DNA clamp-loading complex assembles the beta sliding clamp onto the primed template and plays a central role in the organization and communication at the replication fork.

It localises to the cytoplasm. It is found in the nucleoid. It catalyses the reaction DNA(n) + a 2'-deoxyribonucleoside 5'-triphosphate = DNA(n+1) + diphosphate. Functionally, part of the beta sliding clamp loading complex, which hydrolyzes ATP to load the beta clamp onto primed DNA to form the DNA replication pre-initiation complex. DNA polymerase III is a complex, multichain enzyme responsible for most of the replicative synthesis in bacteria. This DNA polymerase also exhibits 3'-5' exonuclease activity. The delta subunit is the wrench that will open the beta subunit dimer. The DNA clamp loading complex (tau(3),delta,delta') is thought to load beta dimers onto DNA by binding ATP which alters the complex's conformation so it can bind beta sliding clamp dimers and open them at one interface. Primed DNA is recognized, ATP is hydrolyzed releasing the clamp loading complex and closing the beta sliding clamp ring around the primed DNA. In Bacillus subtilis (strain 168), this protein is DNA polymerase III subunit delta.